Consider the following 559-residue polypeptide: Glucose-6-phosphate isomerase (559 aa).

E363 functions as the Proton donor in the catalytic mechanism. Active-site residues include H394 and K523.

The protein belongs to the GPI family.

It localises to the cytoplasm. The enzyme catalyses alpha-D-glucose 6-phosphate = beta-D-fructose 6-phosphate. It participates in carbohydrate biosynthesis; gluconeogenesis. Its pathway is carbohydrate degradation; glycolysis; D-glyceraldehyde 3-phosphate and glycerone phosphate from D-glucose: step 2/4. Functionally, catalyzes the reversible isomerization of glucose-6-phosphate to fructose-6-phosphate. This is Glucose-6-phosphate isomerase from Bartonella henselae (strain ATCC 49882 / DSM 28221 / CCUG 30454 / Houston 1) (Rochalimaea henselae).